The primary structure comprises 144 residues: Large ribosomal subunit protein uL15 (144 aa).

Residues 20 to 49 (GRGIGSGLGKTGGRGHKGQKSRSGGFHKVG) are disordered. Over residues 21-31 (RGIGSGLGKTG) the composition is skewed to gly residues.

The protein belongs to the universal ribosomal protein uL15 family. In terms of assembly, part of the 50S ribosomal subunit.

Functionally, binds to the 23S rRNA. The polypeptide is Large ribosomal subunit protein uL15 (Neisseria gonorrhoeae (strain ATCC 700825 / FA 1090)).